Here is a 209-residue protein sequence, read N- to C-terminus: Ribosomal RNA large subunit methyltransferase E (209 aa).

Residues Gly63, Trp65, Asp83, Asp99, and Asp124 each coordinate S-adenosyl-L-methionine. Lys164 functions as the Proton acceptor in the catalytic mechanism.

Belongs to the class I-like SAM-binding methyltransferase superfamily. RNA methyltransferase RlmE family.

The protein resides in the cytoplasm. The enzyme catalyses uridine(2552) in 23S rRNA + S-adenosyl-L-methionine = 2'-O-methyluridine(2552) in 23S rRNA + S-adenosyl-L-homocysteine + H(+). Specifically methylates the uridine in position 2552 of 23S rRNA at the 2'-O position of the ribose in the fully assembled 50S ribosomal subunit. The chain is Ribosomal RNA large subunit methyltransferase E from Pectobacterium atrosepticum (strain SCRI 1043 / ATCC BAA-672) (Erwinia carotovora subsp. atroseptica).